The sequence spans 614 residues: Putative amino acid transporter AAT1 (614 aa).

The next 11 helical transmembrane spans lie at 184–216, 222–243, 255–275, 295–311, 318–340, 360–380, 401–417, 437–459, 531–547, 553–575, and 587–613; these read VLFL…LILL, YITT…YGNL, LIDF…LILV, RIFI…PLTF, INCF…GYQS, HFFK…NACF, ILIQ…LGYL, SILL…NFIA, CAAI…EFNV, FIGI…LIYY, and RYAT…FIII.

It belongs to the amino acid/polyamine transporter 2 family.

Its subcellular location is the vacuole membrane. Putative amino acid transporter. Involved in maintaining the osmotic homeostasis of the digestive vacuole. Important for the timely development and growth of the asexual-stage parasites and male gametocyte maturation. The polypeptide is Putative amino acid transporter AAT1 (Plasmodium berghei (strain Anka)).